We begin with the raw amino-acid sequence, 301 residues long: MNVTLRPPLTTAPRRPDGAGSVQVQLDPNVVIGTAKVFSVYGKGGIGKSTTSSNLSVALSKLGKRVLQIGCDPKHDSTFTLTKRLVPTVIDILEQVNFHAEELRPEDFVYQGYNGVMCVEAGGPPAGTGCGGYVVGQTVKLLKEHHLLEDTDVVIFDVLGDVVCGGFAAPLQHADRALIVAANDFDSIFAMNRIVAAIQAKSRNYPVRLGGVIANRSAATDQIDKFNERAGLKTVAHFPDLDVIRKSRLKKCTLFEMEPSPDVERAQNEYLRLAASLLAGVEPMQAVPLKDRDIFDLLGFD.

Residues 1 to 13 are compositionally biased toward low complexity; it reads MNVTLRPPLTTAP. Residues 1-21 form a disordered region; sequence MNVTLRPPLTTAPRRPDGAGS. Residues 45-50 and lysine 74 contribute to the ATP site; that span reads GIGKST. Serine 49 serves as a coordination point for Mg(2+). Residues cysteine 130 and cysteine 164 each coordinate [4Fe-4S] cluster. ATP is bound by residues 215 to 216 and 239 to 241; these read NR and PDL.

This sequence belongs to the NifH/BchL/ChlL family. In terms of assembly, homodimer. Protochlorophyllide reductase is composed of three subunits; BchL, BchN and BchB. The cofactor is [4Fe-4S] cluster.

The catalysed reaction is chlorophyllide a + oxidized 2[4Fe-4S]-[ferredoxin] + 2 ADP + 2 phosphate = protochlorophyllide a + reduced 2[4Fe-4S]-[ferredoxin] + 2 ATP + 2 H2O. It functions in the pathway porphyrin-containing compound metabolism; bacteriochlorophyll biosynthesis (light-independent). Its function is as follows. Component of the dark-operative protochlorophyllide reductase (DPOR) that uses Mg-ATP and reduced ferredoxin to reduce ring D of protochlorophyllide (Pchlide) to form chlorophyllide a (Chlide). This reaction is light-independent. The L component serves as a unique electron donor to the NB-component of the complex, and binds Mg-ATP. This chain is Light-independent protochlorophyllide reductase iron-sulfur ATP-binding protein, found in Bradyrhizobium sp. (strain BTAi1 / ATCC BAA-1182).